A 96-amino-acid polypeptide reads, in one-letter code: Gastrolith matrix protein (96 aa).

Tandem repeats lie at residues Gly11–Phe15, Gly16–Phe20, Gly21–Phe25, Gly30–Phe34, Gly35–Phe39, Gly50–Phe54, Gly55–Phe59, Gly65–Phe69, and Gly70–Phe74. The segment at Gly11–Phe74 is 9 X 5 AA tandem repeat of G-S-X-X-F. Positions Gly75–Arg96 are disordered.

Post-translationally, the N-terminus is blocked. In terms of tissue distribution, expressed in the gastroliths.

It localises to the secreted. Functionally, associates with chitin and plays a role in calcification. The chain is Gastrolith matrix protein from Procambarus clarkii (Red swamp crayfish).